A 120-amino-acid polypeptide reads, in one-letter code: Small ribosomal subunit protein uS12 (120 aa).

Position 88 is a 3-methylthioaspartic acid (Asp-88).

The protein belongs to the universal ribosomal protein uS12 family. Part of the 30S ribosomal subunit. Contacts proteins S8 and S17. May interact with IF1 in the 30S initiation complex.

Its function is as follows. With S4 and S5 plays an important role in translational accuracy. In terms of biological role, interacts with and stabilizes bases of the 16S rRNA that are involved in tRNA selection in the A site and with the mRNA backbone. Located at the interface of the 30S and 50S subunits, it traverses the body of the 30S subunit contacting proteins on the other side and probably holding the rRNA structure together. The combined cluster of proteins S8, S12 and S17 appears to hold together the shoulder and platform of the 30S subunit. The sequence is that of Small ribosomal subunit protein uS12 from Carsonella ruddii (strain PV).